Here is a 132-residue protein sequence, read N- to C-terminus: MVEKNTYFIGVGRRKTAVATVKLMSGNGVIVIDGKPIEERFTRIQERNVILNPMMVTDTMGKFNAVIKVLGGGVTGQSGAIAHGIARALEKTDEKLRAALKSNGLLTRDDRTKERKKPGLKRARKAPQYTKR.

The disordered stretch occupies residues 103–132 (NGLLTRDDRTKERKKPGLKRARKAPQYTKR). Over residues 114 to 132 (ERKKPGLKRARKAPQYTKR) the composition is skewed to basic residues.

This sequence belongs to the universal ribosomal protein uS9 family.

In Dehalococcoides mccartyi (strain CBDB1), this protein is Small ribosomal subunit protein uS9.